A 161-amino-acid polypeptide reads, in one-letter code: MVRPYTRKDYIRKIPASKIVQYDMGNLSGEFPLEVTLAVKEHTHLSHNSLEAARIAANRYLQRTTGKLGYRLKIRTYPHHIVRENPMATGAGADRVQSGMRGAFGKAVSSEALVRANQKIITAYVQVKDFEKAKVALNRAAMKLPVTCKLVIDKGHDLVQF.

This sequence belongs to the universal ribosomal protein uL16 family.

In Methanosphaera stadtmanae (strain ATCC 43021 / DSM 3091 / JCM 11832 / MCB-3), this protein is Large ribosomal subunit protein uL16.